The primary structure comprises 154 residues: Endoribonuclease YbeY (154 aa).

His113, His117, and His123 together coordinate Zn(2+).

This sequence belongs to the endoribonuclease YbeY family. Zn(2+) is required as a cofactor.

It localises to the cytoplasm. In terms of biological role, single strand-specific metallo-endoribonuclease involved in late-stage 70S ribosome quality control and in maturation of the 3' terminus of the 16S rRNA. The sequence is that of Endoribonuclease YbeY from Vibrio vulnificus (strain YJ016).